Here is a 108-residue protein sequence, read N- to C-terminus: Small ribosomal subunit protein bS16 (108 aa).

This sequence belongs to the bacterial ribosomal protein bS16 family.

The protein is Small ribosomal subunit protein bS16 of Orientia tsutsugamushi (strain Boryong) (Rickettsia tsutsugamushi).